The primary structure comprises 114 residues: Transcription initiation factor IIA subunit 2 (114 aa).

This sequence belongs to the TFIIA subunit 2 family. As to quaternary structure, TFIIA is a heterodimer composed of the large toa1 and the small toa2 subunits.

The protein localises to the nucleus. In terms of biological role, TFIIA is a component of the transcription machinery of RNA polymerase II and plays an important role in transcriptional activation. TFIIA in a complex with tbp mediates transcriptional activity. The protein is Transcription initiation factor IIA subunit 2 (toa2) of Fusarium vanettenii (strain ATCC MYA-4622 / CBS 123669 / FGSC 9596 / NRRL 45880 / 77-13-4) (Fusarium solani subsp. pisi).